The primary structure comprises 3996 residues: Probable E3 ubiquitin-protein ligase HECTD4 (3996 aa).

A helical membrane pass occupies residues T282–P302. Over residues P1494–N1510 the composition is skewed to polar residues. Disordered stretches follow at residues P1494 to A1524 and P1616 to R1637. T2080 carries the post-translational modification Phosphothreonine. Disordered regions lie at residues F2219–P2245, T2859–L2919, E3017–S3053, and F3327–P3403. The span at A2232–P2245 shows a compositional bias: acidic residues. Residues L2866–L2887 are compositionally biased toward low complexity. Over residues S2888–R2897 the composition is skewed to basic residues. Composition is skewed to basic and acidic residues over residues E3017–K3037, F3327–P3341, and L3370–P3403. One can recognise an HECT domain in the interval S3627–G3996. C3964 functions as the Glycyl thioester intermediate in the catalytic mechanism.

Its subcellular location is the membrane. The catalysed reaction is S-ubiquitinyl-[E2 ubiquitin-conjugating enzyme]-L-cysteine + [acceptor protein]-L-lysine = [E2 ubiquitin-conjugating enzyme]-L-cysteine + N(6)-ubiquitinyl-[acceptor protein]-L-lysine.. It functions in the pathway protein modification; protein ubiquitination. E3 ubiquitin-protein ligase which accepts ubiquitin from an E2 ubiquitin-conjugating enzyme in the form of a thioester and then directly transfers the ubiquitin to targeted substrates. In Homo sapiens (Human), this protein is Probable E3 ubiquitin-protein ligase HECTD4 (HECTD4).